A 157-amino-acid chain; its full sequence is Regenerating islet-derived protein 4 (157 aa).

Residues 1–22 (MASKCVRLLLLLSWVAGPEVLS) form the signal peptide. C29 and C40 are oxidised to a cystine. In terms of domain architecture, C-type lectin spans 36 to 154 (YRSHCYGYFR…CTKRQHFLCK (119 aa)). Residues N49, N62, and N101 are each glycosylated (N-linked (GlcNAc...) asparagine). Cystine bridges form between C57–C153 and C128–C145. A carbohydrate is bound by residues 97 to 101 (DPQKN) and 134 to 136 (KDK).

The protein localises to the secreted. In terms of biological role, calcium-independent lectin displaying mannose-binding specificity and able to maintain carbohydrate recognition activity in an acidic environment. May be involved in inflammatory and metaplastic responses of the gastrointestinal epithelium. The protein is Regenerating islet-derived protein 4 (Reg4) of Rattus norvegicus (Rat).